Reading from the N-terminus, the 394-residue chain is Protein maelstrom (394 aa).

The HMG box DNA-binding region spans 2 to 69 (APKKQNGFMM…ARRDKRGSLN (68 aa)). The segment at 44 to 93 (TQQRGPYNSDAKDANAARRDKRGSLNGHGQVDKAQREAAESLMDKAQREA) is disordered. Residues 73–93 (QVDKAQREAAESLMDKAQREA) show a composition bias toward basic and acidic residues.

This sequence belongs to the maelstrom family.

It is found in the cytoplasm. The protein localises to the nucleus. Involved both in the piRNA and miRNA metabolic processes. As a component of the meiotic nuage, plays a central role during oogenesis by repressing transposable elements and preventing their mobilization, which is essential for the germline integrity. Repression of transposable elements is mediated via the piRNA metabolic process, which mediates the repression of transposable elements during meiosis by forming complexes composed of piRNAs and Piwi proteins and governs the repression of transposons. As a nuclear component, it is required for proper differentiation in the germline stem cell (GSC) lineage by repressing microRNA-7 (miR-7), thereby acting as an indirect regulator of bag-of-marbles (Bam). Acts by binding to the promoter of miR-7 gene and repressing its expression; miR-7 repression alleviates the Bam repression by miR-7, thereby allowing differentiation in the germline stem cell (GSC) lineage. The chain is Protein maelstrom (mael) from Drosophila simulans (Fruit fly).